The primary structure comprises 269 residues: Eukaryotic translation initiation factor 3 subunit G-1 (269 aa).

The RRM domain maps to Ala188 to Pro266. A Phosphoserine modification is found at Ser198.

Belongs to the eIF-3 subunit G family. Component of the eukaryotic translation initiation factor 3 (eIF-3) complex. The eIF-3 complex interacts with pix.

The protein localises to the cytoplasm. Functionally, RNA-binding component of the eukaryotic translation initiation factor 3 (eIF-3) complex, which is involved in protein synthesis of a specialized repertoire of mRNAs and, together with other initiation factors, stimulates binding of mRNA and methionyl-tRNAi to the 40S ribosome. The eIF-3 complex specifically targets and initiates translation of a subset of mRNAs involved in cell proliferation. This subunit can bind 18S rRNA. The polypeptide is Eukaryotic translation initiation factor 3 subunit G-1 (Drosophila melanogaster (Fruit fly)).